The following is a 462-amino-acid chain: UPF0236 protein TTE2489 (462 aa).

Belongs to the UPF0236 family.

In Caldanaerobacter subterraneus subsp. tengcongensis (strain DSM 15242 / JCM 11007 / NBRC 100824 / MB4) (Thermoanaerobacter tengcongensis), this protein is UPF0236 protein TTE2489.